Reading from the N-terminus, the 429-residue chain is FAD-dependent monooxygenase azaH (429 aa).

The chain crosses the membrane as a helical span at residues 5 to 25; it reads SIEVAIIGAGITGITLALGLL. FAD-binding residues include E35 and G48. N-linked (GlcNAc...) asparagine glycosylation is found at N75 and N87. R116 contributes to the FAD binding site. R199 is a catalytic residue. Positions 315 and 328 each coordinate FAD.

Belongs to the paxM FAD-dependent monooxygenase family. The cofactor is FAD.

The protein localises to the membrane. It participates in secondary metabolite biosynthesis. Its function is as follows. FAD-dependent monooxygenase; part of the gene cluster that mediates the biosynthesis of azaphilones, a class of fungal metabolites characterized by a highly oxygenated pyrano-quinone bicyclic core and exhibiting a broad range of bioactivities. In the first step, the non-reducing polyketide synthase azaA forms the hexaketide precursor from successive condensations of five malonyl-CoA units, presumably with a simple acetyl-CoA starter unit. The reactive polyketide chain then undergoes a PT-mediated C2-C7 cyclization to afford the aromatic ring and is eventually released as an aldehyde through the R-domain. The putative ketoreductase azaE is proposed to catalyze the reduction of the terminal ketone resulting in the early culture product FK17-P2a. The monooxygenase azaH was demonstrated to be the only enzyme required to convert FK17-P2a to azanigerone E. AzaH first hydroxylates the benzaldehyde intermediate FK17-P2a at C4, which triggers the formation of the pyran-ring to afford azanigerone E. In parallel, the 2,4-dimethylhexanoyl chain is synthesized by the HR-PKS azaB and is proposed to be transferred to the C4-hydroxyl of azanigerone E by the acyltransferase azaD directly from the ACP domain of azaB. Alternatively, the 2,4-dimethyl-hexanoyl chain may be offloaded from the HR-PKS as a carboxylic acid and converted to an acyl-CoA by azaF. The resulting acyl-CoA molecule could then be taken up as a substrate by AzaD to form azanigerone B. To yield the carboxylic acid substituent in azanigerone A, the hydroxypropyl side chain of azanigerone B would need to undergo a C-C oxidative cleavage catalyzed by cytochrome P450 AzaI. AzaI is proposed to act on a vicinal diol that leads to a C-C bond scission either through an alkoxyradical intermediate or a peroxy complex. In the biosynthesis of azanigerone A, azanigerone B first undergoes hydroxylation at C10, possibly catalyzed by one of the two FAD-dependent monooxygenases encoded in the cluster, azaG or azaL, resulting in the vicinal diol azanigerone C. Oxidative cleavage of azanigerone C by azaI would yield the corresponding aldehyde derivative of azanigerone A. Finally, the dehydrogenase azaJ is proposed to convert the aldehyde functional group into the carboxylic acid, completing the conversion from azanigerone B to azanigerone A. Alternatively, the oxidation of aldehyde to carboxylic acid may be catalyzed by the same P450 enzyme azaI via consecutive oxidation or by endogenous alcohol dehydrogenase. This is FAD-dependent monooxygenase azaH from Aspergillus niger (strain ATCC 1015 / CBS 113.46 / FGSC A1144 / LSHB Ac4 / NCTC 3858a / NRRL 328 / USDA 3528.7).